Here is a 263-residue protein sequence, read N- to C-terminus: Indole-3-glycerol phosphate synthase (263 aa).

Belongs to the TrpC family.

It catalyses the reaction 1-(2-carboxyphenylamino)-1-deoxy-D-ribulose 5-phosphate + H(+) = (1S,2R)-1-C-(indol-3-yl)glycerol 3-phosphate + CO2 + H2O. It participates in amino-acid biosynthesis; L-tryptophan biosynthesis; L-tryptophan from chorismate: step 4/5. The protein is Indole-3-glycerol phosphate synthase of Polaromonas naphthalenivorans (strain CJ2).